Reading from the N-terminus, the 100-residue chain is Guanine nucleotide exchange factor MSS4 homolog (100 aa).

The region spanning 1–100 (MSNLRIVCQH…YLLLCSLEKN (100 aa)) is the MSS4 domain. Positions 8, 11, 73, and 76 each coordinate Zn(2+).

The protein belongs to the DSS4/MSS4 family.

Its function is as follows. Guanine-nucleotide-releasing protein that acts on members of the sec4/ypt1/rab subfamily. In Schizosaccharomyces pombe (strain 972 / ATCC 24843) (Fission yeast), this protein is Guanine nucleotide exchange factor MSS4 homolog.